The primary structure comprises 683 residues: Leucine-rich repeat and calponin homology domain-containing protein 4 (683 aa).

Low complexity predominate over residues 1-18 (MAAAVAAPLAAGGEEAAA). Residues 1 to 34 (MAAAVAAPLAAGGEEAAATTSVPGSPGLPGRRSA) form a disordered region. 9 LRR repeats span residues 41-64 (AVAT…AARS), 67-90 (LSDI…ACQL), 92-113 (SLEG…LGNL), 114-136 (TALT…ICQL), 138-158 (LRVL…IGTL), 159-181 (GSLR…LCGL), 182-204 (SSLR…LGDL), 206-226 (LVRL…FCRL), and 227-250 (RHLQ…CLKG). Residues 268–292 (ALGDLAPSRPPSFSPCPAEDLFPGH) form a disordered region. A phosphoserine mark is found at S279, S281, S304, S307, S309, and S313. Disordered regions lie at residues 326-436 (FRIS…LLKP) and 449-539 (STQA…DEKD). Basic and acidic residues-rich tracts occupy residues 330–345 (ELAR…KEDG), 357–376 (IDSH…EQRP), and 384–418 (GDRE…ERRQ). Phosphoserine is present on residues S432 and S457. Residues 449 to 460 (STQAMHNGSPKS) show a composition bias toward polar residues. Low complexity-rich tracts occupy residues 461–481 (SASQ…PASQ) and 511–524 (SSSQ…SPDS). A phosphoserine mark is found at S511, S513, S517, S521, and S589. Residues 534-647 (VPDEKDLMTQ…ALEAVKRVGG (114 aa)) form the Calponin-homology (CH) domain. The helical transmembrane segment at 653-673 (LWPPSGLGGFVVFYVVLMLLL) threads the bilayer.

The protein resides in the cell membrane. In terms of biological role, accessory protein that regulates signaling by multiple TLRs, acting as a broad-spanning regulator of the innate immune response. In macrophages, binds LPS and promotes proper docking of LPS in lipid raft membrane. May be required for lipid raft maintenance. This is Leucine-rich repeat and calponin homology domain-containing protein 4 from Homo sapiens (Human).